Consider the following 176-residue polypeptide: Warthog protein 5 (176 aa).

An N-terminal signal peptide occupies residues 1-21; that stretch reads MCSMWLMASWLMAFVAGSTLA. A glycan (N-linked (GlcNAc...) asparagine) is linked at Asn-70.

As to expression, expressed in seam cells, excretory cell, reproductive system, pharynx, pharyngeal-intestinal valve cells, neurons and neuronal support cells.

The protein resides in the secreted. Its function is as follows. Intercellular signal essential for a variety of patterning events during development. This is Warthog protein 5 (wrt-5) from Caenorhabditis elegans.